Reading from the N-terminus, the 216-residue chain is Heart- and neural crest derivatives-expressed protein 2 (216 aa).

The segment at 74–115 (MDHSHYGGVPPGSGPPGLGGPRPVKRRGTANRKERRRTQSIN) is disordered. A compositionally biased stretch (gly residues) spans 82-93 (VPPGSGPPGLGG). The segment covering 96 to 111 (PVKRRGTANRKERRRT) has biased composition (basic residues). The bHLH domain occupies 98-150 (KRRGTANRKERRRTQSINSAFAELRECIPNVPADTKLSKIKTLRLATSYIAYL).

In terms of assembly, efficient DNA binding requires dimerization with another bHLH protein.

It is found in the nucleus. Its function is as follows. Essential for cardiac morphogenesis. Binds DNA on E-box consensus sequence 5'-CANNTG-3'. Plays an important role in limb development, particularly in the establishment of anterior-posterior polarization of the limb bud. In Gallus gallus (Chicken), this protein is Heart- and neural crest derivatives-expressed protein 2 (HAND2).